A 257-amino-acid polypeptide reads, in one-letter code: 5-keto-4-deoxy-D-glucarate aldolase (257 aa).

Catalysis depends on His-51, which acts as the Proton acceptor. Gln-152 contacts substrate. Position 154 (Glu-154) interacts with Mg(2+). Substrate is bound by residues Ser-179 and Asp-180. Asp-180 contacts Mg(2+).

Belongs to the HpcH/HpaI aldolase family. KDGluc aldolase subfamily. As to quaternary structure, homohexamer; trimer of dimers. It depends on Mg(2+) as a cofactor.

It carries out the reaction 5-dehydro-4-deoxy-D-glucarate = 2-hydroxy-3-oxopropanoate + pyruvate. The enzyme catalyses 2-dehydro-3-deoxy-D-glucarate = 2-hydroxy-3-oxopropanoate + pyruvate. The protein operates within carbohydrate acid metabolism; galactarate degradation; D-glycerate from galactarate: step 2/3. Functionally, catalyzes the reversible retro-aldol cleavage of both 5-keto-4-deoxy-D-glucarate and 2-keto-3-deoxy-D-glucarate to pyruvate and tartronic semialdehyde. The sequence is that of 5-keto-4-deoxy-D-glucarate aldolase from Citrobacter koseri (strain ATCC BAA-895 / CDC 4225-83 / SGSC4696).